We begin with the raw amino-acid sequence, 534 residues long: Probable protein kinase UbiB (534 aa).

A helical membrane pass occupies residues 23-43 (DLLFALPLPWFLLAVRYVLPW). Residues 125 to 492 (RFDVDPLASA…WKKRKDDWFL (368 aa)) form the Protein kinase domain. ATP-binding positions include 131–139 (LASASVAQV) and lysine 153. Aspartate 288 serves as the catalytic Proton acceptor. Helical transmembrane passes span 490-510 (WFLR…AIGG) and 512-532 (LNQL…YLIV).

It belongs to the ABC1 family. UbiB subfamily.

The protein resides in the cell inner membrane. It participates in cofactor biosynthesis; ubiquinone biosynthesis [regulation]. In terms of biological role, is probably a protein kinase regulator of UbiI activity which is involved in aerobic coenzyme Q (ubiquinone) biosynthesis. This is Probable protein kinase UbiB from Pseudomonas fluorescens (strain SBW25).